The primary structure comprises 300 residues: tRNA dimethylallyltransferase (300 aa).

Residue 9-16 (GTTASGKS) coordinates ATP. 11–16 (TASGKS) provides a ligand contact to substrate. Positions 34–37 (DSLC) are interaction with substrate tRNA.

The protein belongs to the IPP transferase family. In terms of assembly, monomer. It depends on Mg(2+) as a cofactor.

The catalysed reaction is adenosine(37) in tRNA + dimethylallyl diphosphate = N(6)-dimethylallyladenosine(37) in tRNA + diphosphate. In terms of biological role, catalyzes the transfer of a dimethylallyl group onto the adenine at position 37 in tRNAs that read codons beginning with uridine, leading to the formation of N6-(dimethylallyl)adenosine (i(6)A). This is tRNA dimethylallyltransferase from Campylobacter fetus subsp. fetus (strain 82-40).